A 78-amino-acid chain; its full sequence is Small ribosomal subunit protein bS21A (78 aa).

A compositionally biased stretch (basic and acidic residues) spans 30–52 (MKARSAYEKPSEKRAREKGEAVR). The disordered stretch occupies residues 30-78 (MKARSAYEKPSEKRAREKGEAVRRQRKLARKKLQREGLLPAPKKAVRAR). Positions 53–62 (RQRKLARKKL) are enriched in basic residues.

The protein belongs to the bacterial ribosomal protein bS21 family.

The protein is Small ribosomal subunit protein bS21A of Rhizobium etli (strain ATCC 51251 / DSM 11541 / JCM 21823 / NBRC 15573 / CFN 42).